We begin with the raw amino-acid sequence, 249 residues long: MADS-box transcription factor 7 (249 aa).

In terms of domain architecture, MADS-box spans 1–61 (MGRGRVELKR…GKLYEFCSTQ (61 aa)). The K-box domain maps to 90-180 (LKASRNEYLK…RRKLEESNHV (91 aa)).

As to quaternary structure, may interact with the K-box of MADS6. May interact with MADS13 and MADS18. In terms of tissue distribution, expressed in lodicules, stamens and carpels.

The protein resides in the nucleus. Its function is as follows. Probable transcription factor. May be involved in the control of flowering time. This chain is MADS-box transcription factor 7 (MADS7), found in Oryza sativa subsp. japonica (Rice).